A 372-amino-acid polypeptide reads, in one-letter code: MKFQIDKTDGNARACTITTAHSVIKTPIFMPVGTVGAVKSLDALDLKEILDAKIILANTYHMFLRPGSKIVKEFGGLHGFTKFDRSFLTDSGGFQAFSLRTNTKNDDDGIHFKSHIDGSLHYFTPTSVLDTQYDFGSDIMMILDDLVALPADPKRVKLSIERTIKWAKKAINYHLQKRESGVGLNQNIFGIIQGGTDENARKFCAQSLCELPFDGLAIGGLSVGETNREMYDTVEAVMPYIDSARPRYLMGVGTPEDIVENVERGVDMFDCVMPTRNARNGTLFTSFGKINIKSARFIHDDTPIDPCCDCYTCKNYSRGYLNHLYRAREITFYRLASLHNLHYYLHLVSDIRTAILEGKFLEFKKDFYSKRS.

The Proton acceptor role is filled by D90. Residues D90–F94, D144, Q193, and G220 each bind substrate. The segment at G251–D257 is RNA binding. Catalysis depends on D270, which acts as the Nucleophile. Residues T275–R279 form an RNA binding; important for wobble base 34 recognition region. Zn(2+) is bound by residues C308, C310, C313, and H339.

It belongs to the queuine tRNA-ribosyltransferase family. In terms of assembly, homodimer. Within each dimer, one monomer is responsible for RNA recognition and catalysis, while the other monomer binds to the replacement base PreQ1. Zn(2+) serves as cofactor.

The enzyme catalyses 7-aminomethyl-7-carbaguanine + guanosine(34) in tRNA = 7-aminomethyl-7-carbaguanosine(34) in tRNA + guanine. Its pathway is tRNA modification; tRNA-queuosine biosynthesis. Its function is as follows. Catalyzes the base-exchange of a guanine (G) residue with the queuine precursor 7-aminomethyl-7-deazaguanine (PreQ1) at position 34 (anticodon wobble position) in tRNAs with GU(N) anticodons (tRNA-Asp, -Asn, -His and -Tyr). Catalysis occurs through a double-displacement mechanism. The nucleophile active site attacks the C1' of nucleotide 34 to detach the guanine base from the RNA, forming a covalent enzyme-RNA intermediate. The proton acceptor active site deprotonates the incoming PreQ1, allowing a nucleophilic attack on the C1' of the ribose to form the product. After dissociation, two additional enzymatic reactions on the tRNA convert PreQ1 to queuine (Q), resulting in the hypermodified nucleoside queuosine (7-(((4,5-cis-dihydroxy-2-cyclopenten-1-yl)amino)methyl)-7-deazaguanosine). This is Queuine tRNA-ribosyltransferase from Campylobacter hominis (strain ATCC BAA-381 / DSM 21671 / CCUG 45161 / LMG 19568 / NCTC 13146 / CH001A).